An 836-amino-acid chain; its full sequence is Lon protease (836 aa).

One can recognise a Lon N-terminal domain in the interval 41-233 (LPVLPLRNTV…RLIHFLNREV (193 aa)). 385–392 (GPPGVGKT) lines the ATP pocket. Residues 627–811 (VMLSGVAVGL…DDLIDYVLEP (185 aa)) enclose the Lon proteolytic domain. Active-site residues include serine 714 and lysine 757. Residues 816-836 (APQFKVEDKDHTPETTGNESE) form a disordered region.

The protein belongs to the peptidase S16 family. In terms of assembly, homohexamer. Organized in a ring with a central cavity.

It localises to the cytoplasm. The enzyme catalyses Hydrolysis of proteins in presence of ATP.. In terms of biological role, ATP-dependent serine protease that mediates the selective degradation of mutant and abnormal proteins as well as certain short-lived regulatory proteins. Required for cellular homeostasis and for survival from DNA damage and developmental changes induced by stress. Degrades polypeptides processively to yield small peptide fragments that are 5 to 10 amino acids long. Binds to DNA in a double-stranded, site-specific manner. The sequence is that of Lon protease from Chloroherpeton thalassium (strain ATCC 35110 / GB-78).